A 368-amino-acid polypeptide reads, in one-letter code: N-succinylamino acid racemase (368 aa).

2-succinylbenzoate is bound by residues Ser135 and 161 to 163 (KLK). Lys163 serves as the catalytic Proton donor. Asp189 contributes to the Mg(2+) binding site. Asn191 provides a ligand contact to 2-succinylbenzoate. The Mg(2+) site is built by Glu214 and Asp239. Residue Lys263 is the Proton acceptor of the active site. Ile293 is a 2-succinylbenzoate binding site.

The protein belongs to the mandelate racemase/muconate lactonizing enzyme family. MenC type 2 subfamily. In terms of assembly, homooctamer. It depends on a divalent metal cation as a cofactor.

It catalyses the reaction N-acetyl-D-methionine = N-acetyl-L-methionine. The catalysed reaction is (1R,6R)-6-hydroxy-2-succinyl-cyclohexa-2,4-diene-1-carboxylate = 2-succinylbenzoate + H2O. Its activity is regulated as follows. Inhibited by EDTA and sulfhydryl reagents such as p-chloromercuribenzoic acid. Both OSBS and NAAAR activities are inhibited competitively by salicylhydroxamate. In terms of biological role, acts as a N-succinylamino acid racemase (NSAR) that catalyzes the racemization of N-succinyl-phenylglycine and N-succinyl-methionine. Can catalyze the racemization of a broad range of N-acylamino acids, including N-acetyl-D/L-methionine, N-propionyl-D/L-methionine, N-butyryl-D/L-methionine and N-chloroacetyl-L-valine. Also converts 2-succinyl-6-hydroxy-2,4-cyclohexadiene-1-carboxylate (SHCHC) to 2-succinylbenzoate (OSB). Catalyzes both N-succinylamino acid racemization and OSB synthesis at equivalent rates. NSAR is probably the biological function of this enzyme. This is N-succinylamino acid racemase from Amycolatopsis sp.